Consider the following 192-residue polypeptide: Akirin-1 (192 aa).

The tract at residues 17–71 (LLSPGSPKRRRCAPLPGPTPGLRPPDAEPPPPFQTQTPPQSLQQPAPPGSERRLP) is disordered. Serine 22 carries the post-translational modification Phosphoserine. The Nuclear localization signal signature appears at 23 to 28 (PKRRRC). A compositionally biased stretch (pro residues) spans 31 to 49 (LPGPTPGLRPPDAEPPPPF). The span at 50–60 (QTQTPPQSLQQ) shows a compositional bias: low complexity. Threonine 72 is subject to Phosphothreonine. Polar residues predominate over residues 104-122 (ASESQPHSSALTAPSSPGS). The interval 104 to 127 (ASESQPHSSALTAPSSPGSSWMKK) is disordered. The SYVS motif motif lies at 189-192 (SYVS).

It belongs to the akirin family. As to expression, widely expressed with the highest expression in heart, liver, placenta and peripheral blood leukocytes.

It localises to the nucleus. Molecular adapter that acts as a bridge between proteins, and which is involved skeletal muscle development. Functions as a signal transducer for MSTN during skeletal muscle regeneration and myogenesis. May regulate chemotaxis of both macrophages and myoblasts by reorganising actin cytoskeleton, leading to more efficient lamellipodia formation via a PI3 kinase dependent pathway. In contrast to AKIRIN2, not involved in nuclear import of proteasomes. This chain is Akirin-1, found in Homo sapiens (Human).